The primary structure comprises 213 residues: Ras-related protein Rab-39B (213 aa).

Positions 17, 20, 21, 22, 23, 37, and 40 each coordinate GTP. Ser-22 contacts Mg(2+). Residues 35–43 (QVSDPTVGV) are switch-I. Mg(2+)-binding residues include Thr-40 and Asp-64. 6 residues coordinate GTP: Gly-67, His-123, Lys-124, Asp-126, Ala-154, and Arg-155. The interval 67-83 (GQERFRSITRAYYRNSV) is switch-II. Residue Ser-201 is modified to Phosphoserine. S-geranylgeranyl cysteine attachment occurs at residues Cys-211 and Cys-213. Cysteine methyl ester is present on Cys-213.

The protein belongs to the small GTPase superfamily. Rab family. Interacts (GDP-bound) with C9orf72; C9orf72 in complex with SMCR8 acts as a GEF for RAB39B. Interacts (in GTP-bound form) with PICK1 (via PDZ domain); a PICK1 homodimer may allow simultaneous association of RAB39B and GRIA2 to PICK1 which is involved in GRIA2 trafficking. Interacts with isoform c of RASSF1; the interaction is strong. Interacts with isoform a of RASSF1; the interaction is weak. Interacts with the DLG4/PSD-95. Interacts (GTP-bound) with HOPS complex components VPS39 and VPS41. The cofactor is Mg(2+). Specifically expressed in neuron and neuronal precursors in the brain. Expression is high in all regions of the brain with highest levels observed in the hippocampus.

It localises to the cell membrane. Its subcellular location is the cytoplasmic vesicle membrane. It is found in the golgi apparatus. The protein resides in the cytoplasmic vesicle. The protein localises to the autophagosome membrane. It localises to the autolysosome membrane. The catalysed reaction is GTP + H2O = GDP + phosphate + H(+). Regulated by guanine nucleotide exchange factors (GEFs) including C9orf72-SMCR8 complex, which promote the exchange of bound GDP for free GTP. Regulated by GTPase activating proteins (GAPs) which increase the GTP hydrolysis activity. Inhibited by GDP dissociation inhibitors (GDIs). Functionally, the small GTPases Rab are key regulators of intracellular membrane trafficking, from the formation of transport vesicles to their fusion with membranes. Rabs cycle between an inactive GDP-bound form and an active GTP-bound form that is able to recruit to membranes different sets of downstream effectors directly responsible for vesicle formation, movement, tethering and fusion. RAB39B is involved in autophagy and may function in autophagosome formation. Binds downstream effector PICK1 to ensure selectively GRIA2 exit from the endoplasmic reticulum to the Golgi and to regulate AMPAR composition at the post-synapses and thus synaptic transmission. May regulate the homeostasis of SNCA/alpha-synuclein. The chain is Ras-related protein Rab-39B from Mus musculus (Mouse).